We begin with the raw amino-acid sequence, 102 residues long: Small ribosomal subunit protein uS10 (102 aa).

The protein belongs to the universal ribosomal protein uS10 family. Part of the 30S ribosomal subunit.

Its function is as follows. Involved in the binding of tRNA to the ribosomes. This chain is Small ribosomal subunit protein uS10, found in Acidiphilium cryptum (strain JF-5).